Reading from the N-terminus, the 425-residue chain is Trigger factor (425 aa).

One can recognise a PPIase FKBP-type domain in the interval 163–248; it reads GDTAVIDFEG…VHEIKTKELP (86 aa).

Belongs to the FKBP-type PPIase family. Tig subfamily.

It localises to the cytoplasm. It catalyses the reaction [protein]-peptidylproline (omega=180) = [protein]-peptidylproline (omega=0). Functionally, involved in protein export. Acts as a chaperone by maintaining the newly synthesized protein in an open conformation. Functions as a peptidyl-prolyl cis-trans isomerase. The protein is Trigger factor of Bacillus cereus (strain ATCC 10987 / NRS 248).